Consider the following 117-residue polypeptide: UPF0102 protein YE3728 (117 aa).

Belongs to the UPF0102 family.

The protein is UPF0102 protein YE3728 of Yersinia enterocolitica serotype O:8 / biotype 1B (strain NCTC 13174 / 8081).